Reading from the N-terminus, the 409-residue chain is O-methyltransferase pyiA (409 aa).

Polar residues predominate over residues 1 to 21 (MASQDGTTELLSQSVNSTCIP). The tract at residues 1–46 (MASQDGTTELLSQSVNSTCIPGSTYHVDRGRASSASTPPTSPPLSE) is disordered. Residue Asp271 coordinates S-adenosyl-L-methionine. Catalysis depends on His317, which acts as the Proton acceptor.

The protein belongs to the class I-like SAM-binding methyltransferase superfamily. Cation-independent O-methyltransferase family.

It functions in the pathway mycotoxin biosynthesis. Functionally, O-methyltransferase; part of the gene cluster that mediates the biosynthesis of the mycotoxin pyrichalasin H, a tyrosine-derived cytochalasan that inhibits the growth of rice seedlings, but also inhibits lymphocyte capping and actin polymerization and alters cell morphology. Pyrichalasin H is indicated as the responsible agent for the genus-specific pathogenicity of M.grisea toward crabgrass. The first step in the pathway is catalyzed by the O-methyltransferase pyiA which methylates free tyrosine to generate the precursor O-methyltyrosine. The hybrid PKS-NRPS pyiS, assisted by the enoyl reductase pyiC, are responsible for fusion of the O-methyltyrosine precursor and the polyketide backbone. The polyketide synthase module (PKS) of pyiS is responsible for the synthesis of the polyketide backbone and the downstream nonribosomal peptide synthetase (NRPS) amidates the carboxyl end of the polyketide with the O-methyltyrosine precursor. As the NRPS A-domain demonstrates substrate tolerance, pyiS can also use phenylalanine, tyrosine and even para-chlorophenylalanine as amino acid precursor, which leads to the production of novel cytochalasans, including halogenated cytochalasans. Because pyiS lacks a designated enoylreductase (ER) domain, the required activity is provided the enoyl reductase pyiC. Reduction by the hydrolyase pyiE leads to 1,5-dihydropyrrolone, which is substrate for dehydration and intra-molecular Diels-Alder cyclization by the Diels-Alderase pyiF to yield the required isoindolone-fused macrocycle. The tailoring cytochrome P450 monooxygenases piyD and piyG catalyze the hydroxylation at C-18 and C-7, respectivily, whereas the short-chain dehydrogenase/reductase pyiH reduces the carbonyl at C-21 in preparation for the transfer of an acetyl group by the acetyltransferase pyiB. These 3 reactions whose order is not clear yet, lead to the production of O-methylpyrichalasin J, a deacetylated pyrichalasin H. Finally, pyiB to converts O-methylpyrichalasin J into the final product pyrichalasin H via acetylation of C-21. This chain is O-methyltransferase pyiA, found in Pyricularia grisea (Crabgrass-specific blast fungus).